The sequence spans 120 residues: Large ribosomal subunit protein uL18 (120 aa).

This sequence belongs to the universal ribosomal protein uL18 family. As to quaternary structure, part of the 50S ribosomal subunit; part of the 5S rRNA/L5/L18/L25 subcomplex. Contacts the 5S and 23S rRNAs.

In terms of biological role, this is one of the proteins that bind and probably mediate the attachment of the 5S RNA into the large ribosomal subunit, where it forms part of the central protuberance. The chain is Large ribosomal subunit protein uL18 from Paramagnetospirillum magneticum (strain ATCC 700264 / AMB-1) (Magnetospirillum magneticum).